The chain runs to 381 residues: Alkanesulfonate monooxygenase (381 aa).

The protein belongs to the SsuD family. In terms of assembly, homotetramer.

It carries out the reaction an alkanesulfonate + FMNH2 + O2 = an aldehyde + FMN + sulfite + H2O + 2 H(+). Functionally, catalyzes the desulfonation of aliphatic sulfonates. This chain is Alkanesulfonate monooxygenase, found in Escherichia fergusonii (strain ATCC 35469 / DSM 13698 / CCUG 18766 / IAM 14443 / JCM 21226 / LMG 7866 / NBRC 102419 / NCTC 12128 / CDC 0568-73).